The primary structure comprises 128 residues: Large ribosomal subunit protein bL17 (128 aa).

This sequence belongs to the bacterial ribosomal protein bL17 family. Part of the 50S ribosomal subunit. Contacts protein L32.

In Haemophilus influenzae (strain 86-028NP), this protein is Large ribosomal subunit protein bL17.